A 723-amino-acid chain; its full sequence is Bifunctional lysine-specific demethylase and histidyl-hydroxylase NO66 (723 aa).

Disordered regions lie at residues 13–34 (KKTA…QKAA) and 48–213 (SAVK…APSC). A compositionally biased stretch (basic residues) spans 14–31 (KTAKKPAKKTTKQNRQKQ). Residues 49 to 72 (AVKQNNGAKGKAKANGVKGNAKAQ) are compositionally biased toward low complexity. Composition is skewed to acidic residues over residues 88-106 (ESVD…EDNE) and 114-129 (EDDY…EFEE). The span at 133-155 (NSPSGSCSCSASSGSSNTENSPP) shows a compositional bias: low complexity. Basic and acidic residues predominate over residues 190–199 (EQKEGKELSK). Positions 204–213 (KSAPAAAPSC) are enriched in low complexity. The JmjC domain occupies 379 to 518 (NPSTYLKGLR…NLMEALMPAV (140 aa)). Positions 419, 421, and 484 each coordinate Fe cation.

This sequence belongs to the ROX family. NO66 subfamily. Requires Fe(2+) as cofactor.

The protein localises to the nucleus. The enzyme catalyses N(6),N(6)-dimethyl-L-lysyl(36)-[histone H3] + 2 2-oxoglutarate + 2 O2 = L-lysyl(36)-[histone H3] + 2 formaldehyde + 2 succinate + 2 CO2. In terms of biological role, oxygenase that can act as both a histone lysine demethylase and a ribosomal histidine hydroxylase. Specifically demethylates 'Lys-4' (H3K4me) and 'Lys-36' (H3K36me) of histone H3, thereby playing a central role in histone code. The polypeptide is Bifunctional lysine-specific demethylase and histidyl-hydroxylase NO66 (Drosophila grimshawi (Hawaiian fruit fly)).